A 258-amino-acid polypeptide reads, in one-letter code: Acetylglutamate kinase (258 aa).

Substrate contacts are provided by residues 44–45 (GG), arginine 66, and asparagine 158. Residues 181–186 (DVSGIL) and 209–211 (IIT) contribute to the ATP site.

It belongs to the acetylglutamate kinase family. ArgB subfamily. As to quaternary structure, homodimer.

The protein localises to the cytoplasm. The enzyme catalyses N-acetyl-L-glutamate + ATP = N-acetyl-L-glutamyl 5-phosphate + ADP. The protein operates within amino-acid biosynthesis; L-arginine biosynthesis; N(2)-acetyl-L-ornithine from L-glutamate: step 2/4. Functionally, catalyzes the ATP-dependent phosphorylation of N-acetyl-L-glutamate. This is Acetylglutamate kinase from Shigella dysenteriae serotype 1 (strain Sd197).